The chain runs to 134 residues: Small ribosomal subunit protein uS12 (134 aa).

At D89 the chain carries 3-methylthioaspartic acid. Residues 101–134 form a disordered region; that stretch reads TLDASGVNGRNQSRSKYGTKRPKPGQAAAGGKKK. Low complexity predominate over residues 125 to 134; sequence GQAAAGGKKK.

It belongs to the universal ribosomal protein uS12 family. As to quaternary structure, part of the 30S ribosomal subunit. Contacts proteins S8 and S17. May interact with IF1 in the 30S initiation complex.

In terms of biological role, with S4 and S5 plays an important role in translational accuracy. Interacts with and stabilizes bases of the 16S rRNA that are involved in tRNA selection in the A site and with the mRNA backbone. Located at the interface of the 30S and 50S subunits, it traverses the body of the 30S subunit contacting proteins on the other side and probably holding the rRNA structure together. The combined cluster of proteins S8, S12 and S17 appears to hold together the shoulder and platform of the 30S subunit. The chain is Small ribosomal subunit protein uS12 from Gemmatimonas aurantiaca (strain DSM 14586 / JCM 11422 / NBRC 100505 / T-27).